The primary structure comprises 118 residues: UPF0295 protein BCG9842_B4782 (118 aa).

2 helical membrane passes run 12–32 and 43–63; these read IRTF…LGVF and FMMV…WIGM.

Belongs to the UPF0295 family.

Its subcellular location is the cell membrane. The polypeptide is UPF0295 protein BCG9842_B4782 (Bacillus cereus (strain G9842)).